Consider the following 2273-residue polypeptide: Nonribosomal peptide synthetase hasD (2273 aa).

The segment at 100-446 (FHDQLQKHSS…AGLGLALGYF (347 aa)) is adenylation 1. One can recognise a Carrier 1 domain in the interval 588–664 (ERGLGAVESV…NIAAAVVELS (77 aa)). Serine 625 is subject to O-(pantetheine 4'-phosphoryl)serine. A condensation 1 region spans residues 696–1120 (IAPMTDMQTR…AAQPDTDLSN (425 aa)). The segment at 1156-1487 (ENSIQAHPDI…SGVQVTPGYL (332 aa)) is adenylation 2. A Carrier 2 domain is found at 1634–1714 (DLETDTQRVL…DLSLAIDELV (81 aa)). Residue serine 1673 is modified to O-(pantetheine 4'-phosphoryl)serine. Residues 1735 to 2127 (GQLPLSYLEK…QDLEVDMEYD (393 aa)) are condensation 2. The interval 2174 to 2200 (PVGLTPSHEGSAELTNGTNKTDSTTGQ) is disordered. Residues 2186–2200 (ELTNGTNKTDSTTGQ) are compositionally biased toward polar residues. The Carrier 3 domain maps to 2201–2273 (QELENNLTDV…LELATCAVII (73 aa)). Serine 2235 carries the post-translational modification O-(pantetheine 4'-phosphoryl)serine.

It belongs to the NRP synthetase family. Pantetheine 4'-phosphate serves as cofactor.

The protein operates within secondary metabolite biosynthesis. Functionally, nonribosomal peptide synthetase; part of the gene cluster that mediates the biosynthesis of hexadehydro-astechrome (HAS), a tryptophan-derived iron(III)-complex that acts as a virulence factor in infected mice. Within the pathway, the NRPS condenses tryptophan and alanine to produce the Trp-Ala dipeptide. The 7-dimethylallyltryptophan synthase hasE then catalyzes the prenylation of the hasD-tethered tryptophan or the resulting tethered Trp-Ala dipeptide at the C-7 position of the indole moiety. HAS biosynthesis continues via tethered intermediates with the succesive actions of the cytochrome P450 monooxygenase hasH, the O-methyltransferase hasC, and the FAD-linked oxidoreductase hasG. The resulting O-methylated diketopiperazine is then released from hasD. Finally, three O-methylated diketopiperazine molecules assemble in a trimeric complex with Fe(III) to produce hexadehydro-astechrome. The protein is Nonribosomal peptide synthetase hasD of Aspergillus fumigatus (strain CBS 144.89 / FGSC A1163 / CEA10) (Neosartorya fumigata).